Here is a 287-residue protein sequence, read N- to C-terminus: RxLR effector protein Avr4 (287 aa).

The signal sequence occupies residues 1-24 (MRSLHILLVFTASLLASLTESAKA). A RxLR-dEER motif is present at residues 42-55 (RFLRAQTDEKNEER). Residues 115–138 (KYERMQWQKLKEGETLTFMRLGDR) are W1 motif. A W2 motif region spans residues 148–171 (QLLRWVAQKKPVESVYDDLQVAGF). A W3 motif region spans residues 221–244 (LFEKWAMEGTHIKSVITTLKLNGK). Positions 246-267 (ASEMANNENFPALLKYVKLYLD) are y motif.

Belongs to the RxLR effector family.

Its subcellular location is the secreted. It localises to the host cytoplasm. The protein resides in the host nucleus. It is found in the host nucleolus. The protein localises to the host cytoskeleton. Secreted effector that acts as an elicitor of hypersensitive response (HR) specifically on plants carrying defense protein R4, through its interaction with this protein. The protein is RxLR effector protein Avr4 of Phytophthora infestans (strain T30-4) (Potato late blight agent).